The chain runs to 92 residues: UPF0473 protein OB2006 (92 aa).

The protein belongs to the UPF0473 family.

The chain is UPF0473 protein OB2006 from Oceanobacillus iheyensis (strain DSM 14371 / CIP 107618 / JCM 11309 / KCTC 3954 / HTE831).